The following is a 437-amino-acid chain: 5-hydroxytryptamine receptor 3B (437 aa).

The signal sequence occupies residues 1-21 (MILLWSCLLVAVVGILGTATP). Over 22 to 235 (QPGNSSLHRL…RFNVVIRRCP (214 aa)) the chain is Extracellular. N-linked (GlcNAc...) asparagine glycans are attached at residues asparagine 25, asparagine 92, and asparagine 134. A disulfide bond links cysteine 151 and cysteine 165. The helical transmembrane segment at 236–255 (LAYVVSLLIPSIFLMLVDLG) threads the bilayer. Topologically, residues 256–266 (SFYLPPNCRAR) are cytoplasmic. Residues 267–284 (IVFKTNVLVGYTVFRVNM) form a helical membrane-spanning segment. The Extracellular portion of the chain corresponds to 285 to 295 (SDEVPRSAGCT). The helical transmembrane segment at 296–324 (SLIGVFFTVCMALLVLSLSKSILLIKFLY) threads the bilayer. The Cytoplasmic portion of the chain corresponds to 325 to 410 (EERHSEQERP…WLAILCHFDQ (86 aa)). The tract at residues 377–409 (FWFQLQSINNSLRTRDQVYQKEVEWLAILCHFD) is HA-stretch; determines single-channel conductance in 5-HT3 receptors. The helical transmembrane segment at 411–434 (LLFRIYLAVLGLYTVTLCSLWALW) threads the bilayer. The Extracellular portion of the chain corresponds to 435–437 (SRM).

The protein belongs to the ligand-gated ion channel (TC 1.A.9) family. 5-hydroxytryptamine receptor (TC 1.A.9.2) subfamily. HTR3B sub-subfamily. Forms homopentameric as well as heteropentameric serotonin-activated cation-selective channel complexes with HTR3A. The homomeric complex is not functional. Heteropentameric complexes display properties which resemble that of neuronal serotonin-activated channels in vivo. Post-translationally, N-glycosylation is required for membrane localization. In terms of tissue distribution, expressed in peripheral neurons, but not in neurons of the central nervous system.

The protein resides in the postsynaptic cell membrane. It localises to the cell membrane. The enzyme catalyses Na(+)(in) = Na(+)(out). It catalyses the reaction K(+)(in) = K(+)(out). The catalysed reaction is Ca(2+)(in) = Ca(2+)(out). Functionally, forms serotonin (5-hydroxytryptamine/5-HT3)-activated cation-selective channel complexes, which when activated cause fast, depolarizing responses in neurons. The protein is 5-hydroxytryptamine receptor 3B of Rattus norvegicus (Rat).